The following is a 125-amino-acid chain: MKTVILFGFLLALLGYLEAEHAQSDPEFTAKARQMLAVFGNSEVDRYTKSRNLPALIEFYEKYSSRLPLTVQDRTYANNVIRRYRAHNNQQVDGVPAQGGVGVVFALLLPFAVSIVEGIAKAIRE.

The signal sequence occupies residues 1–19 (MKTVILFGFLLALLGYLEA).

It belongs to the Turandot family.

Its subcellular location is the secreted. A humoral factor that may play a role in stress tolerance. The polypeptide is Protein Turandot F (Drosophila melanogaster (Fruit fly)).